Consider the following 118-residue polypeptide: Small ribosomal subunit protein uS13 (118 aa).

Residues 92 to 118 (KKHLPVRGQRTKTNARTRKGPRKPIKK) are disordered.

The protein belongs to the universal ribosomal protein uS13 family. In terms of assembly, part of the 30S ribosomal subunit. Forms a loose heterodimer with protein S19. Forms two bridges to the 50S subunit in the 70S ribosome.

Its function is as follows. Located at the top of the head of the 30S subunit, it contacts several helices of the 16S rRNA. In the 70S ribosome it contacts the 23S rRNA (bridge B1a) and protein L5 of the 50S subunit (bridge B1b), connecting the 2 subunits; these bridges are implicated in subunit movement. Contacts the tRNAs in the A and P-sites. The sequence is that of Small ribosomal subunit protein uS13 from Wigglesworthia glossinidia brevipalpis.